A 161-amino-acid polypeptide reads, in one-letter code: Ribonuclease H (161 aa).

The region spanning 11–152 (GPRPVVIHTD…ADQLARDGLT (142 aa)) is the RNase H type-1 domain. Mg(2+)-binding residues include D20, E58, D80, and D144. The tract at residues 137–161 (HDENERADQLARDGLTENRMKSRIG) is disordered.

Belongs to the RNase H family. Monomer. Requires Mg(2+) as cofactor.

The protein localises to the cytoplasm. It carries out the reaction Endonucleolytic cleavage to 5'-phosphomonoester.. Endonuclease that specifically degrades the RNA of RNA-DNA hybrids. This Rhodopseudomonas palustris (strain HaA2) protein is Ribonuclease H.